Here is a 407-residue protein sequence, read N- to C-terminus: Tryptophan synthase beta chain (407 aa).

Lys91 bears the N6-(pyridoxal phosphate)lysine mark.

Belongs to the TrpB family. In terms of assembly, tetramer of two alpha and two beta chains. Pyridoxal 5'-phosphate serves as cofactor.

The enzyme catalyses (1S,2R)-1-C-(indol-3-yl)glycerol 3-phosphate + L-serine = D-glyceraldehyde 3-phosphate + L-tryptophan + H2O. It functions in the pathway amino-acid biosynthesis; L-tryptophan biosynthesis; L-tryptophan from chorismate: step 5/5. In terms of biological role, the beta subunit is responsible for the synthesis of L-tryptophan from indole and L-serine. The protein is Tryptophan synthase beta chain of Streptococcus pneumoniae (strain 70585).